We begin with the raw amino-acid sequence, 230 residues long: 2,3-bisphosphoglycerate-dependent phosphoglycerate mutase (230 aa).

Residues 8–15, 21–22, arginine 60, 87–90, lysine 98, 114–115, and 183–184 contribute to the substrate site; these read RHGESEWN, TG, ERHY, RR, and GN. Histidine 9 serves as the catalytic Tele-phosphohistidine intermediate. The Proton donor/acceptor role is filled by glutamate 87.

It belongs to the phosphoglycerate mutase family. BPG-dependent PGAM subfamily.

The enzyme catalyses (2R)-2-phosphoglycerate = (2R)-3-phosphoglycerate. It functions in the pathway carbohydrate degradation; glycolysis; pyruvate from D-glyceraldehyde 3-phosphate: step 3/5. In terms of biological role, catalyzes the interconversion of 2-phosphoglycerate and 3-phosphoglycerate. This Streptococcus pneumoniae (strain ATCC BAA-255 / R6) protein is 2,3-bisphosphoglycerate-dependent phosphoglycerate mutase.